Here is a 559-residue protein sequence, read N- to C-terminus: Large neutral amino acids transporter small subunit 3 (559 aa).

Residues 20–40 form a helical membrane-spanning segment; that stretch reads VLENLFFSAVLLGWGSLLIIL. N-linked (GlcNAc...) asparagine glycosylation occurs at Asn57. A run of 5 helical transmembrane segments spans residues 78–98, 105–124, 131–151, 168–188, and 191–211; these read LGFT…GILM, PVRL…MALA, LSPL…CLTF, MALM…IKLI, and AGVA…LIFL. N-linked (GlcNAc...) asparagine glycans are attached at residues Asn212 and Asn229. Phosphoserine occurs at positions 237, 262, and 267. Helical transmembrane passes span 304-324, 357-377, 419-439, 446-466, 485-505, and 510-530; these read FLWS…YMAA, SVFG…GYIM, AISA…TCLI, FVTF…CGSL, LISA…VGPL, and FWVN…PSYL.

Belongs to the SLC43A transporter (TC 2.A.1.44) family. In terms of tissue distribution, ubiquitously expressed in fetus and adult. Highest expression in adult pancreas, liver, skeletal muscle. In fetus, highest expression in liver and lower levels in kidney, and lung. Exclusively expressed in the glomeruli along the glomerular capillary walls.

It localises to the cell membrane. The protein resides in the apical cell membrane. The protein localises to the endoplasmic reticulum membrane. The enzyme catalyses D-leucine(in) = D-leucine(out). It catalyses the reaction L-leucine(in) = L-leucine(out). It carries out the reaction L-isoleucine(in) = L-isoleucine(out). The catalysed reaction is L-methionine(in) = L-methionine(out). The enzyme catalyses L-phenylalanine(in) = L-phenylalanine(out). It catalyses the reaction L-valine(in) = L-valine(out). Its function is as follows. Uniport that mediates the transport of neutral amino acids such as L-leucine, L-isoleucine, L-valine, and L-phenylalanine. The transport activity is sodium ions-independent, electroneutral and mediated by a facilitated diffusion. This is Large neutral amino acids transporter small subunit 3 from Homo sapiens (Human).